The chain runs to 361 residues: Peptide chain release factor 1 (361 aa).

Residue glutamine 235 is modified to N5-methylglutamine.

This sequence belongs to the prokaryotic/mitochondrial release factor family. Methylated by PrmC. Methylation increases the termination efficiency of RF1.

Its subcellular location is the cytoplasm. In terms of biological role, peptide chain release factor 1 directs the termination of translation in response to the peptide chain termination codons UAG and UAA. The protein is Peptide chain release factor 1 of Rhodopseudomonas palustris (strain ATCC BAA-98 / CGA009).